The primary structure comprises 865 residues: Bifunctional uridylyltransferase/uridylyl-removing enzyme (865 aa).

Residues 1–318 (MPHVDLNPLK…FPRPDSDARL (318 aa)) form a uridylyltransferase region. A uridylyl-removing region spans residues 319-675 (IDDDFRNLRE…VRPTEHGEGL (357 aa)). The HD domain maps to 437–559 (VDQHTLAVVR…VGDERRLAAL (123 aa)). ACT domains are found at residues 676–762 (QVMV…RLPH) and 789–865 (RLSV…QQAA). Residues 747 to 767 (DPHAARHAHAPRRLPHSHARR) form a disordered region. The segment covering 751-767 (ARHAHAPRRLPHSHARR) has biased composition (basic residues).

It belongs to the GlnD family. The cofactor is Mg(2+).

The enzyme catalyses [protein-PII]-L-tyrosine + UTP = [protein-PII]-uridylyl-L-tyrosine + diphosphate. It catalyses the reaction [protein-PII]-uridylyl-L-tyrosine + H2O = [protein-PII]-L-tyrosine + UMP + H(+). Uridylyltransferase (UTase) activity is inhibited by glutamine, while glutamine activates uridylyl-removing (UR) activity. Functionally, modifies, by uridylylation and deuridylylation, the PII regulatory proteins (GlnB and homologs), in response to the nitrogen status of the cell that GlnD senses through the glutamine level. Under low glutamine levels, catalyzes the conversion of the PII proteins and UTP to PII-UMP and PPi, while under higher glutamine levels, GlnD hydrolyzes PII-UMP to PII and UMP (deuridylylation). Thus, controls uridylylation state and activity of the PII proteins, and plays an important role in the regulation of nitrogen assimilation and metabolism. The sequence is that of Bifunctional uridylyltransferase/uridylyl-removing enzyme from Bordetella bronchiseptica (strain ATCC BAA-588 / NCTC 13252 / RB50) (Alcaligenes bronchisepticus).